Here is a 325-residue protein sequence, read N- to C-terminus: Transaldolase (325 aa).

Lys125 (schiff-base intermediate with substrate) is an active-site residue.

It belongs to the transaldolase family. Type 2 subfamily.

The protein localises to the cytoplasm. The catalysed reaction is D-sedoheptulose 7-phosphate + D-glyceraldehyde 3-phosphate = D-erythrose 4-phosphate + beta-D-fructose 6-phosphate. Its pathway is carbohydrate degradation; pentose phosphate pathway; D-glyceraldehyde 3-phosphate and beta-D-fructose 6-phosphate from D-ribose 5-phosphate and D-xylulose 5-phosphate (non-oxidative stage): step 2/3. Its function is as follows. Transaldolase is important for the balance of metabolites in the pentose-phosphate pathway. The sequence is that of Transaldolase from Campylobacter jejuni subsp. jejuni serotype O:6 (strain 81116 / NCTC 11828).